Consider the following 215-residue polypeptide: UPF0488 protein C8orf33 homolog (215 aa).

Disordered regions lie at residues 1–72 (MLED…DEQL), 87–111 (LRTQ…RSSK), and 158–199 (CKPV…DTKP). Residues 29-39 (AKKHKKKKKKK) show a composition bias toward basic residues. Positions 40 to 63 (AGEGKDDQQRETKTTEGETAKQET) are enriched in basic and acidic residues. Basic and acidic residues-rich tracts occupy residues 167 to 178 (ERNTQPKNKTDG) and 188 to 199 (TNEHTKTEDTKP).

This sequence belongs to the UPF0488 family.

The polypeptide is UPF0488 protein C8orf33 homolog (Danio rerio (Zebrafish)).